The sequence spans 507 residues: Histidine ammonia-lyase (507 aa).

The segment at residues 143–145 is a cross-link (5-imidazolinone (Ser-Gly)); that stretch reads SSG. Residue Ser144 is modified to 2,3-didehydroalanine (Ser).

This sequence belongs to the PAL/histidase family. Post-translationally, contains an active site 4-methylidene-imidazol-5-one (MIO), which is formed autocatalytically by cyclization and dehydration of residues Ser-Ser-Gly.

Its subcellular location is the cytoplasm. It carries out the reaction L-histidine = trans-urocanate + NH4(+). The protein operates within amino-acid degradation; L-histidine degradation into L-glutamate; N-formimidoyl-L-glutamate from L-histidine: step 1/3. The sequence is that of Histidine ammonia-lyase from Alkaliphilus metalliredigens (strain QYMF).